We begin with the raw amino-acid sequence, 124 residues long: Prefoldin subunit beta (124 aa).

This sequence belongs to the prefoldin subunit beta family. As to quaternary structure, heterohexamer of two alpha and four beta subunits.

The protein resides in the cytoplasm. Functionally, molecular chaperone capable of stabilizing a range of proteins. Seems to fulfill an ATP-independent, HSP70-like function in archaeal de novo protein folding. The protein is Prefoldin subunit beta (pfdB) of Thermoplasma volcanium (strain ATCC 51530 / DSM 4299 / JCM 9571 / NBRC 15438 / GSS1).